The primary structure comprises 321 residues: WD repeat-containing protein VIP3 (321 aa).

WD repeat units follow at residues 12–55 (AHED…LVRT), 58–97 (GHSL…TIAV), 100–140 (APPS…LIST), 156–195 (SSKK…LLHQ), 198–238 (GHNM…LLGS), 241–280 (GHTS…AIQT), and 283–319 (NHND…SLYD).

Component of the nuclear PAF1 complex (PAF1C), which consists of VIP2/ELF7/PAF1, VIP3/SKI8/WDR61, VIP4/LEO1, VIP5/RTF1, VIP6/ELF8/CTR9 and CDC73. Component of the cytoplasmic SKI complex, which consists of SKI2, SKI3 and VIP3/SKI8. Interacts with VIP4 and VIP6.

It is found in the nucleus. Its subcellular location is the cytoplasm. Component of the PAF1 complex (PAF1C) which is involved in histone modifications such as methylation on histone H3 'Lys-4' (H3K4me3). Involved in regulation of flowering time. Required for the expression of the flowering repressor and MADS box gene FLC. Required for histone H3 trimethylation on 'Lys-4' (H3K4me3) and histone dimethylation on 'Lys-36' (H3K36me2) at the FLC locus. Prevents trimethylation on 'Lys-27' (H3K27me3) at the same locus. Not required for meiotic recombination or progression. Component of the SKI complex which is thought to be involved in exosome-mediated RNA decay and associates with transcriptionally active genes in a manner dependent on PAF1 complex (PAF1C). Required for proper progression of cell differentiation process. The sequence is that of WD repeat-containing protein VIP3 from Arabidopsis thaliana (Mouse-ear cress).